Reading from the N-terminus, the 491-residue chain is Glutamyl-tRNA(Gln) amidotransferase subunit A (491 aa).

Residues lysine 81 and serine 156 each act as charge relay system in the active site. Residue serine 180 is the Acyl-ester intermediate of the active site.

This sequence belongs to the amidase family. GatA subfamily. As to quaternary structure, heterotrimer of A, B and C subunits.

It carries out the reaction L-glutamyl-tRNA(Gln) + L-glutamine + ATP + H2O = L-glutaminyl-tRNA(Gln) + L-glutamate + ADP + phosphate + H(+). Allows the formation of correctly charged Gln-tRNA(Gln) through the transamidation of misacylated Glu-tRNA(Gln) in organisms which lack glutaminyl-tRNA synthetase. The reaction takes place in the presence of glutamine and ATP through an activated gamma-phospho-Glu-tRNA(Gln). The chain is Glutamyl-tRNA(Gln) amidotransferase subunit A from Alcanivorax borkumensis (strain ATCC 700651 / DSM 11573 / NCIMB 13689 / SK2).